Here is a 348-residue protein sequence, read N- to C-terminus: Olfactory receptor 2T4 (348 aa).

Over 1-57 the chain is Extracellular; it reads MDNITWMASHTGWSDFILMGLFRQSKHPMANITWMANHTGWSDFILLGLFRQSKHPA. N-linked (GlcNAc...) asparagine glycans are attached at residues Asn-31 and Asn-37. A helical transmembrane segment spans residues 58-81; that stretch reads LLCVVIFVVFLMALSGNAVLILLI. At 82 to 89 the chain is on the cytoplasmic side; that stretch reads HCDAHLHT. Residues 90–111 form a helical membrane-spanning segment; that stretch reads PMYFFISQLSLMDMAYISVTVP. Residues 112 to 132 lie on the Extracellular side of the membrane; that stretch reads KMLLDQVMGVNKISAPECGMQ. A disulfide bridge connects residues Cys-129 and Cys-221. The helical transmembrane segment at 133-152 threads the bilayer; the sequence is MFFYVTLAGSEFFLLATMAY. At 153-171 the chain is on the cytoplasmic side; sequence DRYVAICHPLRYPVLMNHR. The chain crosses the membrane as a helical span at residues 172-190; sequence VCLFLSSGCWFLGSVDGFT. Over 191-227 the chain is Extracellular; that stretch reads FTPITMTFPFRGSREIHHFFCEVPAVLNLSCSDTSLY. N-linked (GlcNAc...) asparagine glycosylation occurs at Asn-218. A helical membrane pass occupies residues 228 to 251; that stretch reads EIFMYLCCVLMLLIPVVIISSSYL. Over 252–268 the chain is Cytoplasmic; it reads LILLTIHGMNSAEGRKK. A helical membrane pass occupies residues 269–291; that stretch reads AFATCSSHLTVVILFYGAAIYTY. Topologically, residues 292-304 are extracellular; it reads MLPSSYHTPEKDM. A helical membrane pass occupies residues 305–324; sequence MVSVFYTILTPVVNPLIYSL. Residues 325–348 are Cytoplasmic-facing; that stretch reads RNKDVMGALKKMLTVEPAFQKAME.

The protein belongs to the G-protein coupled receptor 1 family.

It is found in the cell membrane. In terms of biological role, odorant receptor. The sequence is that of Olfactory receptor 2T4 (OR2T4) from Homo sapiens (Human).